Reading from the N-terminus, the 385-residue chain is Sesquiterpene alcohol synthase (385 aa).

Residues aspartate 123 and aspartate 127 each coordinate Mg(2+). A DDXXD motif motif is present at residues 123-127 (DDISD).

Belongs to the terpene synthase family. The cofactor is Mg(2+). Specifically expressed in tissues lining the cuticle of the abdominal sternites of mature males.

It carries out the reaction (2E,6E)-farnesyl diphosphate + H2O = (1S,6S,7R)-sesquipiperitol + diphosphate. The protein operates within pheromone biosynthesis. Its function is as follows. Sesquiterpene alcohol synthase that catalyzes the formation of (1S,6S,7R)-sesquipiperitol, a terpene intermediate in murgantiol biosynthesis, a male-released aggregation pheromone. The sequence is that of Sesquiterpene alcohol synthase from Murgantia histrionica (Harlequin bug).